The following is a 610-amino-acid chain: MAFYDDSGADSQPFGRPQKPYEGGIVGPRRPRLVTDYGSSLVQWMRTRRPRYKGGHRMETERPSASYIVDMLPPLARIHSPVDTIPVRHLHQSIGKSKKPITVVRWTPEGRRLLTGGHTGEFMLWNGTAFNFETVMDAHYDQLQAGVTSLAWSHSHDWLISGGQKGDIKYWRPNFNNVETIDDAHHDAVRDLAWSPSDTKFLSASDDTTLKIFDFTSRTADTVLTGHNWDVKSCDWHPTKGLLVSGSKDHQVKFWDPRTARCLTTLHSHKNTVTATRFSRVNQNLLATSSRDQTARVFDLRMMRDICILRGHEKPVSSLTWHPIHSSLISTGSEDGSLYHYLLDEPNVPSGQIPTIAPYDSPDPANTPAQVIYPAHRVQYAHSATIWSLDWHPLGHILASGSKDNFTRFWSRARPGETSYMKDRFHIGEEAAEAQGTWSRGFGRRQMREEEEQELQDEAESLVDQRKPTGSVLPGIQIAPPGGTPHNDGLGSQLLPGIGAPQPPPAPSAGIPSSMPQMDPNRLAALLSTQGAPQPNSIPPNTGFPGFPMLPALSGTPPANVDLAELQKQLMSQGIPLPQNFAPQHFSPLPGTGGLPGLQGSNTPDNPYGR.

Residues 1–29 form a disordered region; the sequence is MAFYDDSGADSQPFGRPQKPYEGGIVGPR. 7 WD repeats span residues 96-135, 142-182, 184-223, 226-265, 268-308, 311-351, and 381-420; these read KSKK…FETV, QLQA…ETID, AHHD…ADTV, GHNW…CLTT, SHKN…DICI, GHEK…VPSG, and AHSA…ETSY. 2 disordered regions span residues 480 to 519 and 574 to 610; these read PPGG…PQMD and GIPL…PYGR. Residues 601 to 610 are compositionally biased toward polar residues; it reads SNTPDNPYGR.

It localises to the nucleus. Required for 3'-end cleavage and polyadenylation of pre-mRNAs. Also involved in chromosome segregation where it has a role in chromosome attachment to the mitotic spindle. This is Polyadenylation factor subunit 2 (pfs2) from Aspergillus oryzae (strain ATCC 42149 / RIB 40) (Yellow koji mold).